Here is a 382-residue protein sequence, read N- to C-terminus: Carbamoyl phosphate synthase small chain (382 aa).

The CPSase stretch occupies residues 1 to 187; the sequence is MPTPALLVLA…EFRPQTATEE (187 aa). L-glutamine is bound by residues serine 47, glycine 239, and glycine 241. Residues 191 to 377 enclose the Glutamine amidotransferase type-1 domain; it reads TVVAIDFGVK…VAQMRAYRQQ (187 aa). Cysteine 267 (nucleophile) is an active-site residue. Residues leucine 268, glutamine 271, asparagine 307, glycine 309, and phenylalanine 310 each contribute to the L-glutamine site. Active-site residues include histidine 350 and glutamate 352.

This sequence belongs to the CarA family. As to quaternary structure, composed of two chains; the small (or glutamine) chain promotes the hydrolysis of glutamine to ammonia, which is used by the large (or ammonia) chain to synthesize carbamoyl phosphate. Tetramer of heterodimers (alpha,beta)4.

It catalyses the reaction hydrogencarbonate + L-glutamine + 2 ATP + H2O = carbamoyl phosphate + L-glutamate + 2 ADP + phosphate + 2 H(+). It carries out the reaction L-glutamine + H2O = L-glutamate + NH4(+). It participates in amino-acid biosynthesis; L-arginine biosynthesis; carbamoyl phosphate from bicarbonate: step 1/1. Its pathway is pyrimidine metabolism; UMP biosynthesis via de novo pathway; (S)-dihydroorotate from bicarbonate: step 1/3. Small subunit of the glutamine-dependent carbamoyl phosphate synthetase (CPSase). CPSase catalyzes the formation of carbamoyl phosphate from the ammonia moiety of glutamine, carbonate, and phosphate donated by ATP, constituting the first step of 2 biosynthetic pathways, one leading to arginine and/or urea and the other to pyrimidine nucleotides. The small subunit (glutamine amidotransferase) binds and cleaves glutamine to supply the large subunit with the substrate ammonia. This chain is Carbamoyl phosphate synthase small chain, found in Thermosynechococcus vestitus (strain NIES-2133 / IAM M-273 / BP-1).